The following is a 179-amino-acid chain: Large ribosomal subunit protein uL6 (179 aa).

This sequence belongs to the universal ribosomal protein uL6 family. Part of the 50S ribosomal subunit.

In terms of biological role, this protein binds to the 23S rRNA, and is important in its secondary structure. It is located near the subunit interface in the base of the L7/L12 stalk, and near the tRNA binding site of the peptidyltransferase center. This Prochlorococcus marinus (strain NATL2A) protein is Large ribosomal subunit protein uL6.